The sequence spans 282 residues: NADPH-dependent 7-cyano-7-deazaguanine reductase (282 aa).

Position 88–90 (88–90) interacts with substrate; sequence IES. 90-91 lines the NADPH pocket; that stretch reads SK. Catalysis depends on Cys-190, which acts as the Thioimide intermediate. Asp-197 serves as the catalytic Proton donor. Substrate is bound at residue 229–230; that stretch reads HE. 258–259 serves as a coordination point for NADPH; sequence RG.

The protein belongs to the GTP cyclohydrolase I family. QueF type 2 subfamily. In terms of assembly, homodimer.

The protein localises to the cytoplasm. It catalyses the reaction 7-aminomethyl-7-carbaguanine + 2 NADP(+) = 7-cyano-7-deazaguanine + 2 NADPH + 3 H(+). It participates in tRNA modification; tRNA-queuosine biosynthesis. Functionally, catalyzes the NADPH-dependent reduction of 7-cyano-7-deazaguanine (preQ0) to 7-aminomethyl-7-deazaguanine (preQ1). The sequence is that of NADPH-dependent 7-cyano-7-deazaguanine reductase from Shigella dysenteriae serotype 1 (strain Sd197).